Here is a 545-residue protein sequence, read N- to C-terminus: Chaperonin GroEL 2 (545 aa).

ATP-binding positions include 30–33 (TLGP), Lys-51, 87–91 (DGTTT), Gly-415, and Asp-494. Residues 526–545 (EKGAGMPGMPPGGGYPGMGM) form a disordered region. Positions 536–545 (PGGGYPGMGM) are enriched in gly residues.

Belongs to the chaperonin (HSP60) family. Forms a cylinder of 14 subunits composed of two heptameric rings stacked back-to-back. Interacts with the co-chaperonin GroES.

The protein localises to the cytoplasm. It carries out the reaction ATP + H2O + a folded polypeptide = ADP + phosphate + an unfolded polypeptide.. Together with its co-chaperonin GroES, plays an essential role in assisting protein folding. The GroEL-GroES system forms a nano-cage that allows encapsulation of the non-native substrate proteins and provides a physical environment optimized to promote and accelerate protein folding. This chain is Chaperonin GroEL 2, found in Syntrophus aciditrophicus (strain SB).